The following is a 416-amino-acid chain: Diaminopimelate decarboxylase (416 aa).

Lys60 carries the N6-(pyridoxal phosphate)lysine modification. Pyridoxal 5'-phosphate contacts are provided by residues Gly240 and 274-277; that span reads EPGR. Positions 277, 313, and 317 each coordinate substrate. Cys343 serves as the catalytic Proton donor. 2 residues coordinate substrate: Glu344 and Tyr371. Tyr371 lines the pyridoxal 5'-phosphate pocket.

It belongs to the Orn/Lys/Arg decarboxylase class-II family. LysA subfamily. In terms of assembly, homodimer. Pyridoxal 5'-phosphate is required as a cofactor.

It carries out the reaction meso-2,6-diaminopimelate + H(+) = L-lysine + CO2. It functions in the pathway amino-acid biosynthesis; L-lysine biosynthesis via DAP pathway; L-lysine from DL-2,6-diaminopimelate: step 1/1. Its function is as follows. Specifically catalyzes the decarboxylation of meso-diaminopimelate (meso-DAP) to L-lysine. This Pseudomonas fluorescens protein is Diaminopimelate decarboxylase.